We begin with the raw amino-acid sequence, 804 residues long: Enhancer of polycomb homolog 2 (804 aa).

4 disordered regions span residues 372–395, 484–508, 603–624, and 646–669; these read QSSDDDEFPQVPSPLSELEEENDP, GFSSSSHIAQPPSSPSRTNASDRHC, QSQQSLQQSHPKAQGSGSSDCM, and PVRSEVNKDQNAGHSNLNGVVQPS. 2 stretches are compositionally biased toward polar residues: residues 611–624 and 654–669; these read SHPKAQGSGSSDCM and DQNAGHSNLNGVVQPS.

The protein belongs to the enhancer of polycomb family.

It localises to the nucleus. Its function is as follows. May play a role in transcription or DNA repair. The polypeptide is Enhancer of polycomb homolog 2 (epc2) (Xenopus laevis (African clawed frog)).